Reading from the N-terminus, the 185-residue chain is Ribosome-recycling factor (185 aa).

This sequence belongs to the RRF family.

The protein localises to the cytoplasm. Responsible for the release of ribosomes from messenger RNA at the termination of protein biosynthesis. May increase the efficiency of translation by recycling ribosomes from one round of translation to another. The chain is Ribosome-recycling factor from Salmonella arizonae (strain ATCC BAA-731 / CDC346-86 / RSK2980).